The sequence spans 43 residues: Potassium channel toxin gamma-KTx 4.6 (43 aa).

Intrachain disulfides connect Cys-5–Cys-23, Cys-11–Cys-34, Cys-20–Cys-39, and Cys-24–Cys-41.

This sequence belongs to the ergtoxin family. Gamma-KTx 4 subfamily. As to expression, expressed by the venom gland.

It is found in the secreted. Reversibly blocks Kv11/ERG potassium channels. This Centruroides limpidus (Mexican scorpion) protein is Potassium channel toxin gamma-KTx 4.6.